The following is a 529-amino-acid chain: Bifunctional purine biosynthesis protein PurH (529 aa).

Residues 1–148 (MQQRRPVRRA…KNHKDVAIVV (148 aa)) enclose the MGS-like domain.

The protein belongs to the PurH family.

It catalyses the reaction (6R)-10-formyltetrahydrofolate + 5-amino-1-(5-phospho-beta-D-ribosyl)imidazole-4-carboxamide = 5-formamido-1-(5-phospho-D-ribosyl)imidazole-4-carboxamide + (6S)-5,6,7,8-tetrahydrofolate. The catalysed reaction is IMP + H2O = 5-formamido-1-(5-phospho-D-ribosyl)imidazole-4-carboxamide. It functions in the pathway purine metabolism; IMP biosynthesis via de novo pathway; 5-formamido-1-(5-phospho-D-ribosyl)imidazole-4-carboxamide from 5-amino-1-(5-phospho-D-ribosyl)imidazole-4-carboxamide (10-formyl THF route): step 1/1. It participates in purine metabolism; IMP biosynthesis via de novo pathway; IMP from 5-formamido-1-(5-phospho-D-ribosyl)imidazole-4-carboxamide: step 1/1. This is Bifunctional purine biosynthesis protein PurH from Salmonella paratyphi B (strain ATCC BAA-1250 / SPB7).